Reading from the N-terminus, the 323-residue chain is Dehydrogenase/reductase SDR family member 7B (323 aa).

Over 1–4 the chain is Cytoplasmic; it reads MDLT. The chain crosses the membrane as a helical; Signal-anchor for type II membrane protein span at residues 5–25; it reads SWAIFPLLLASIGVYGLYKLL. Over 26–272 the chain is Lumenal; sequence QKLRSGAYLQ…AVGERRKELL (247 aa). NAD(+) is bound by residues S46 and L48. S178 serves as a coordination point for substrate. Positions 191, 195, and 226 each coordinate NAD(+). The active-site Proton acceptor is Y191.

The protein belongs to the short-chain dehydrogenases/reductases (SDR) family.

It is found in the endoplasmic reticulum membrane. Its function is as follows. Putative oxidoreductase. This is Dehydrogenase/reductase SDR family member 7B (dhrs7b) from Xenopus laevis (African clawed frog).